The following is a 396-amino-acid chain: Subtelomeric hrmA-associated cluster protein AFUB_079040 (396 aa).

2 disordered regions span residues 1–32 (MANKKKPSIKKSVNEPNPHLKQSHASGSQQSL) and 347–396 (YPEN…ECGR). The segment covering 23-32 (SHASGSQQSL) has biased composition (polar residues). Over residues 367–380 (SKKKKDKKKKKSNK) the composition is skewed to basic residues.

Functionally, part of the subtelomeric hrmA-associated cluster (HAC) containing genes that alter the hyphal surface (such as reduced total chitin or increased beta-glucan exposure) and perturb inter-hyphal interactions within the developing biofilms, resulting in a loss of vertically aligned polarized growing filaments. Consequently, this hypoxia-typic morphotype (called H-MORPH) with altered biofilm architecture leads to increased hypoxia fitness, increased host inflammation, rapid disease progression, and mortality in a murine model of invasive aspergillosis. The protein is Subtelomeric hrmA-associated cluster protein AFUB_079040 of Aspergillus fumigatus (strain CBS 144.89 / FGSC A1163 / CEA10) (Neosartorya fumigata).